The following is a 168-amino-acid chain: MLEPDDIALFRGAVKGVKALKQDKFIAPRQKMSKKKSTLRDIREKEDTLFYFSDEYEPLLNEESAVRYLREGEDSHILKQLRRGDFSPELFLDLHGLTKEQAKIELASLLQACENEHVYCASVMTGYGSYILKRQIPRWLVQHPKVRALHQAPKAWGGDAAILILFEV.

The Smr domain maps to 92 to 167 (LDLHGLTKEQ…GDAAILILFE (76 aa)).

The protein belongs to the SmrB family. Associates with collided ribosomes, but not with correctly translating polysomes.

Functionally, acts as a ribosome collision sensor. Detects stalled/collided disomes (pairs of ribosomes where the leading ribosome is stalled and a second ribosome has collided with it) and endonucleolytically cleaves mRNA at the 5' boundary of the stalled ribosome. Stalled/collided disomes form a new interface (primarily via the 30S subunits) that binds SmrB. Cleaved mRNA becomes available for tmRNA ligation, leading to ribosomal subunit dissociation and rescue of stalled ribosomes. The chain is Ribosome rescue factor SmrB from Pasteurella multocida (strain Pm70).